The primary structure comprises 96 residues: MACKHLPFLALAGVLLAYLCSQSEAASNFDCCLTYTKNVYHHARNFVGFTTQMADEACDINAIIFHLKSKRSVCADPKQIWVKRILHLLSLRTKKM.

The first 26 residues, 1–26 (MACKHLPFLALAGVLLAYLCSQSEAA), serve as a signal peptide directing secretion. Disulfide bonds link cysteine 31-cysteine 58 and cysteine 32-cysteine 74.

This sequence belongs to the intercrine beta (chemokine CC) family. In terms of tissue distribution, low levels in thymus and lung.

It localises to the secreted. Acts as a ligand for C-C chemokine receptor CCR6. Signals through binding and activation of CCR6 and induces a strong chemotactic response and mobilization of intracellular calcium ions. The ligand-receptor pair CCL20-CCR6 is responsible for the chemotaxis of dendritic cells (DC), effector/memory T-cells and B-cells and plays an important role at skin and mucosal surfaces under homeostatic and inflammatory conditions, as well as in pathology, including cancer and autoimmune diseases. CCL20 acts as a chemotactic factor that attracts lymphocytes and, slightly, neutrophils, but not monocytes. Involved in the recruitment of both the pro-inflammatory IL17 producing helper T-cells (Th17) and the regulatory T-cells (Treg) to sites of inflammation. Required for optimal migration of thymic natural regulatory T cells (nTregs) and DN1 early thymocyte progenitor cells. Positively regulates sperm motility and chemotaxis via its binding to CCR6 which triggers Ca2+ mobilization in the sperm which is important for its motility. May be involved in formation and function of the mucosal lymphoid tissues by attracting lymphocytes and dendritic cells towards epithelial cells. The sequence is that of C-C motif chemokine 20 (Ccl20) from Rattus norvegicus (Rat).